A 147-amino-acid polypeptide reads, in one-letter code: DNA polymerase III subunit chi (147 aa).

The protein belongs to the DNA polymerase III chi/HolC chain family. In terms of assembly, the DNA polymerase III holoenzyme complex contains at least 10 different subunits organized into 3 functionally essential subassemblies: the Pol III core, the beta sliding clamp processivity factor and the clamp-loading complex. The Pol III core (subunits alpha, epsilon and theta) contains the polymerase and the 3'-5' exonuclease proofreading activities. The polymerase is tethered to the template via the dimeric beta sliding clamp processivity factor. The clamp-loading complex (also called gamma complex) assembles the beta sliding clamp onto the primed template and plays a central role in the organization and communication at the replication fork. The clamp-loading complex contains delta, delta', psi and chi, and 3 copies of either or both of two different DnaX proteins, gamma and tau. The DNA replisome complex has a single clamp loader (3 tau and 1 each of delta, delta', psi and chi subunits) which binds 3 Pol III cores (1 core on the leading strand and 2 on the lagging strand) each with a beta sliding clamp dimer. Additional proteins in the replisome are other copies of gamma, psi (holD) and chi (this protein), SSB, DNA helicase and RNA primase. The clamp loader hydrolyzes ATP to assemble the beta processivity factor onto the primed template and plays a central role in the organization and communication at the replication fork. The only subunit of the DNA polymerase III holoenzyme known to interact with single-stranded DNA binding protein (SSB). Interacts directly with the psi subunit (holD). Interacts directly with DNA helicase YoaA. It binds to HolD and YoaA, but not both simultaneously.

It carries out the reaction DNA(n) + a 2'-deoxyribonucleoside 5'-triphosphate = DNA(n+1) + diphosphate. In terms of biological role, part of the beta sliding clamp loading complex, which hydrolyzes ATP to load the beta clamp onto primed DNA to form the DNA replication pre-initiation complex. DNA polymerase III is a complex, multichain enzyme responsible for most of the replicative synthesis in bacteria. This DNA polymerase also exhibits 3' to 5' exonuclease activity. Genetically identified as involved in the repair of replication forks and tolerance of the chain-terminating nucleoside analog 3' AZT. This subunit may stabilize YoaA and/or stimulate the helicase activity of YoaA. This is DNA polymerase III subunit chi from Escherichia coli (strain K12).